Consider the following 246-residue polypeptide: Small ribosomal subunit protein uS2 (246 aa).

This sequence belongs to the universal ribosomal protein uS2 family.

In Burkholderia cenocepacia (strain HI2424), this protein is Small ribosomal subunit protein uS2.